The following is a 226-amino-acid chain: Orotate phosphoribosyltransferase (226 aa).

Position 30 (Lys-30) interacts with 5-phospho-alpha-D-ribose 1-diphosphate. Phe-38–Phe-39 serves as a coordination point for orotate. 5-phospho-alpha-D-ribose 1-diphosphate-binding positions include Tyr-76 to Lys-77, Arg-106, Lys-107, Lys-110, His-112, and Asp-132 to Ala-140. Orotate-binding residues include Thr-136 and Arg-164.

This sequence belongs to the purine/pyrimidine phosphoribosyltransferase family. PyrE subfamily. In terms of assembly, homodimer.

The enzyme catalyses orotidine 5'-phosphate + diphosphate = orotate + 5-phospho-alpha-D-ribose 1-diphosphate. It participates in pyrimidine metabolism; UMP biosynthesis via de novo pathway; UMP from orotate: step 1/2. Its function is as follows. Catalyzes the transfer of a ribosyl phosphate group from 5-phosphoribose 1-diphosphate to orotate, leading to the formation of orotidine monophosphate (OMP). The polypeptide is Orotate phosphoribosyltransferase (URA5) (Kluyveromyces lactis (strain ATCC 8585 / CBS 2359 / DSM 70799 / NBRC 1267 / NRRL Y-1140 / WM37) (Yeast)).